A 541-amino-acid polypeptide reads, in one-letter code: 5' exonuclease Apollo (541 aa).

Lys334 is covalently cross-linked (Glycyl lysine isopeptide (Lys-Gly) (interchain with G-Cter in SUMO2)). 2 disordered regions span residues 350–375 (TQGVVFESPEEKADQVKVDRDSKKHK) and 450–489 (IGLGSPLWSGGGSGSPTRGKQSNGMGCGSPPTHISRTTHL). The segment covering 358–371 (PEEKADQVKVDRDS) has biased composition (basic and acidic residues). The TBM motif lies at 492 to 507 (ESGGLALKYLLTPVDF).

Belongs to the DNA repair metallo-beta-lactamase (DRMBL) family. As to quaternary structure, interacts with TERF2; the interaction is direct. Interacts with MUS81, MRE11 and FANCD2. Interacts with HSPA2, HSPA8 and HSPA14. Interacts with SPAG5. Post-translationally, ubiquitinated, leading to its degradation. Interaction with TERF2 protects it from ubiquitination.

Its subcellular location is the chromosome. The protein localises to the telomere. It localises to the nucleus. The protein resides in the cytoplasm. It is found in the cytoskeleton. Its subcellular location is the microtubule organizing center. The protein localises to the centrosome. It catalyses the reaction a beta-lactam + H2O = a substituted beta-amino acid. Its function is as follows. 5'-3' exonuclease that plays a central role in telomere maintenance and protection during S-phase. Participates in the protection of telomeres against non-homologous end-joining (NHEJ)-mediated repair, thereby ensuring that telomeres do not fuse. Plays a key role in telomeric loop (T loop) formation by being recruited by TERF2 at the leading end telomeres and by processing leading-end telomeres immediately after their replication via its exonuclease activity: generates 3' single-stranded overhang at the leading end telomeres avoiding blunt leading-end telomeres that are vulnerable to end-joining reactions and expose the telomere end in a manner that activates the DNA repair pathways. Together with TERF2, required to protect telomeres from replicative damage during replication by controlling the amount of DNA topoisomerase (TOP1, TOP2A and TOP2B) needed for telomere replication during fork passage and prevent aberrant telomere topology. Also involved in response to DNA damage: plays a role in response to DNA interstrand cross-links (ICLs) by facilitating double-strand break formation. In case of spindle stress, involved in prophase checkpoint. Possesses beta-lactamase activity, catalyzing the hydrolysis of penicillin G and nitrocefin. Exhibits no activity towards other beta-lactam antibiotic classes including cephalosporins (cefotaxime) and carbapenems (imipenem). The chain is 5' exonuclease Apollo (Dclre1b) from Rattus norvegicus (Rat).